Reading from the N-terminus, the 408-residue chain is NADH-quinone oxidoreductase subunit D (408 aa).

It belongs to the complex I 49 kDa subunit family. NDH-1 is composed of 14 different subunits. Subunits NuoB, C, D, E, F, and G constitute the peripheral sector of the complex.

It is found in the cell inner membrane. It catalyses the reaction a quinone + NADH + 5 H(+)(in) = a quinol + NAD(+) + 4 H(+)(out). Its function is as follows. NDH-1 shuttles electrons from NADH, via FMN and iron-sulfur (Fe-S) centers, to quinones in the respiratory chain. The immediate electron acceptor for the enzyme in this species is believed to be ubiquinone. Couples the redox reaction to proton translocation (for every two electrons transferred, four hydrogen ions are translocated across the cytoplasmic membrane), and thus conserves the redox energy in a proton gradient. The protein is NADH-quinone oxidoreductase subunit D of Campylobacter hominis (strain ATCC BAA-381 / DSM 21671 / CCUG 45161 / LMG 19568 / NCTC 13146 / CH001A).